The primary structure comprises 347 residues: L-threonine 3-dehydrogenase (347 aa).

Cysteine 42 contributes to the Zn(2+) binding site. Catalysis depends on charge relay system residues threonine 44 and histidine 47. Zn(2+) is bound by residues histidine 67, glutamate 68, cysteine 97, cysteine 100, cysteine 103, and cysteine 111. Residues isoleucine 179, glutamate 199, arginine 204, 266-268 (LGL), and 291-292 (IT) contribute to the NAD(+) site.

The protein belongs to the zinc-containing alcohol dehydrogenase family. Homotetramer. Zn(2+) is required as a cofactor.

It localises to the cytoplasm. The catalysed reaction is L-threonine + NAD(+) = (2S)-2-amino-3-oxobutanoate + NADH + H(+). It participates in amino-acid degradation; L-threonine degradation via oxydo-reductase pathway; glycine from L-threonine: step 1/2. Functionally, catalyzes the NAD(+)-dependent oxidation of L-threonine to 2-amino-3-ketobutyrate. This Caldanaerobacter subterraneus subsp. tengcongensis (strain DSM 15242 / JCM 11007 / NBRC 100824 / MB4) (Thermoanaerobacter tengcongensis) protein is L-threonine 3-dehydrogenase.